A 137-amino-acid chain; its full sequence is Large ribosomal subunit protein uL16c (137 aa).

It belongs to the universal ribosomal protein uL16 family. As to quaternary structure, part of the 50S ribosomal subunit.

The protein localises to the plastid. It is found in the chloroplast. This chain is Large ribosomal subunit protein uL16c, found in Adiantum capillus-veneris (Maidenhair fern).